A 431-amino-acid chain; its full sequence is Glutamate-1-semialdehyde 2,1-aminomutase (431 aa).

Residue K269 is modified to N6-(pyridoxal phosphate)lysine.

This sequence belongs to the class-III pyridoxal-phosphate-dependent aminotransferase family. HemL subfamily. Homodimer. Pyridoxal 5'-phosphate is required as a cofactor.

Its subcellular location is the cytoplasm. The enzyme catalyses (S)-4-amino-5-oxopentanoate = 5-aminolevulinate. Its pathway is porphyrin-containing compound metabolism; protoporphyrin-IX biosynthesis; 5-aminolevulinate from L-glutamyl-tRNA(Glu): step 2/2. It participates in porphyrin-containing compound metabolism; chlorophyll biosynthesis. The polypeptide is Glutamate-1-semialdehyde 2,1-aminomutase (Chlorobium chlorochromatii (strain CaD3)).